The primary structure comprises 340 residues: UDP-glucose 4-epimerase (340 aa).

Residues 16 to 17 (YI), 37 to 42 (IDNNKN), 60 to 61 (DL), 82 to 86 (FAAKT), serine 127, tyrosine 154, lysine 158, and phenylalanine 182 each bind NAD(+). Substrate-binding residues include serine 127 and tyrosine 154. Residue tyrosine 154 is the Proton acceptor of the active site. Substrate is bound by residues asparagine 183, 199–200 (TL), 216–218 (FLY), arginine 231, and 295–298 (RSWD).

Belongs to the NAD(P)-dependent epimerase/dehydratase family. In terms of assembly, homodimer. NAD(+) is required as a cofactor.

The catalysed reaction is UDP-alpha-D-glucose = UDP-alpha-D-galactose. It participates in carbohydrate metabolism; galactose metabolism. Its function is as follows. Involved in the metabolism of galactose. Catalyzes the conversion of UDP-galactose (UDP-Gal) to UDP-glucose (UDP-Glc) through a mechanism involving the transient reduction of NAD. The chain is UDP-glucose 4-epimerase (galE) from Mycoplasma genitalium (strain ATCC 33530 / DSM 19775 / NCTC 10195 / G37) (Mycoplasmoides genitalium).